The sequence spans 240 residues: Large ribosomal subunit protein uL2 (240 aa).

Residues 199 to 240 (DHPFGGGGRQHPGRPKSVSRDAAPGRKVGDIASKRTGRGGNE) are disordered. The segment covering 221-231 (APGRKVGDIAS) has biased composition (basic and acidic residues).

The protein belongs to the universal ribosomal protein uL2 family. Part of the 50S ribosomal subunit. Forms a bridge to the 30S subunit in the 70S ribosome.

One of the primary rRNA binding proteins. Required for association of the 30S and 50S subunits to form the 70S ribosome, for tRNA binding and peptide bond formation. It has been suggested to have peptidyltransferase activity; this is somewhat controversial. Makes several contacts with the 16S rRNA in the 70S ribosome. The protein is Large ribosomal subunit protein uL2 of Halobacterium salinarum (strain ATCC 29341 / DSM 671 / R1).